The primary structure comprises 223 residues: MARRPGSSSRGPARSDRLPTEAVTSARKPHAAAPTPPASPDPGLVLLGEFGRPHGLHGEVRLKSHTSEPLAIAGYGPLHASDGRTLELANVRPAAGSSPDLLIVRVKGVDDRTGAEALNRVTLAIARERLGEVEDEDEFFLTDLIGLTVEDGAGTVIGTIVAVPNFGGGDLLEIRPAAGGPTALLPFTKAFVPSLDIAGGKVVADPPDDLFAPPGPKPADDPG.

Over residues 1-12 the composition is skewed to low complexity; sequence MARRPGSSSRGP. Disordered regions lie at residues 1–44 and 203–223; these read MARR…DPGL and VADP…DDPG. The region spanning 135 to 210 is the PRC barrel domain; it reads DEDEFFLTDL…KVVADPPDDL (76 aa).

It belongs to the RimM family. As to quaternary structure, binds ribosomal protein uS19.

Its subcellular location is the cytoplasm. Functionally, an accessory protein needed during the final step in the assembly of 30S ribosomal subunit, possibly for assembly of the head region. Essential for efficient processing of 16S rRNA. May be needed both before and after RbfA during the maturation of 16S rRNA. It has affinity for free ribosomal 30S subunits but not for 70S ribosomes. This chain is Ribosome maturation factor RimM, found in Methylorubrum extorquens (strain CM4 / NCIMB 13688) (Methylobacterium extorquens).